Reading from the N-terminus, the 264-residue chain is Glutamate racemase (264 aa).

Substrate contacts are provided by residues 11–12 and 43–44; these read DS and YG. The active-site Proton donor/acceptor is cysteine 74. 75 to 76 is a substrate binding site; it reads NT. The active-site Proton donor/acceptor is cysteine 193. 194–195 is a binding site for substrate; it reads TH.

The protein belongs to the aspartate/glutamate racemases family.

It carries out the reaction L-glutamate = D-glutamate. The protein operates within cell wall biogenesis; peptidoglycan biosynthesis. Functionally, provides the (R)-glutamate required for cell wall biosynthesis. This is Glutamate racemase from Bifidobacterium longum subsp. infantis (strain ATCC 15697 / DSM 20088 / JCM 1222 / NCTC 11817 / S12).